We begin with the raw amino-acid sequence, 431 residues long: Protein CLT2, chloroplastic (431 aa).

Residues 1 to 79 constitute a chloroplast transit peptide; that stretch reads MDTVLMATTP…PMRRPRFSVG (79 aa). 10 helical membrane-spanning segments follow: residues 99–119, 122–142, 163–183, 188–208, 212–232, 244–264, 284–304, 343–363, 365–385, and 403–423; these read VVIV…LVPM, YPFF…FTIL, FAII…AAAM, VIPI…LLIL, FLLN…VAVS, IGFL…GASI, IFVV…LLLP, ILPL…LHLV, ISSA…AVYI, and FTMG…PTTP.

The protein belongs to the CRT-like transporter family.

The protein resides in the plastid. The protein localises to the chloroplast membrane. In terms of biological role, involved in thiol transport from the plastid to the cytosol. Transports probably both glutathione (GSH) and its precursor, gamma-glutamylcysteine (gamma-EC). This chain is Protein CLT2, chloroplastic, found in Arabidopsis thaliana (Mouse-ear cress).